The chain runs to 465 residues: Gamma-aminobutyric acid receptor subunit rho-2 (465 aa).

Residues 1-20 form the signal peptide; it reads MPYLMRLALVLFCLMALVES. Topologically, residues 21–260 are extracellular; the sequence is RKPRRKRWTG…LYINFTLRRH (240 aa). Residue arginine 105 participates in 4-aminobutanoate binding. N-linked (GlcNAc...) asparagine glycosylation occurs at asparagine 120. Serine 169 is a 4-aminobutanoate binding site. A disulfide bridge links cysteine 178 with cysteine 192. Glutamate 197 contacts 4-aminobutanoate. A glycan (N-linked (GlcNAc...) asparagine) is linked at asparagine 254. The helical transmembrane segment at 261-281 threads the bilayer; the sequence is IFFFLLQTYFPATLMVMLSWV. The Cytoplasmic portion of the chain corresponds to 282–293; sequence SFWIDHRAVPAR. Residues 294–314 form a helical membrane-spanning segment; it reads VSLGIMTVLTMSTIITGVNAS. The Extracellular portion of the chain corresponds to 315-325; it reads MPRVSYIRAVD. A helical transmembrane segment spans residues 326–346; that stretch reads IYLWVSFVFVFLSVLEYAAVN. The Cytoplasmic portion of the chain corresponds to 347–443; that stretch reads YLTTLQEQKE…IFQNTHAIDK (97 aa). The chain crosses the membrane as a helical span at residues 444 to 464; the sequence is YSRLIFPAFYIVFNLIYWSVF. Residue serine 465 is a topological domain, extracellular.

This sequence belongs to the ligand-gated ion channel (TC 1.A.9) family. Gamma-aminobutyric acid receptor (TC 1.A.9.5) subfamily. GABRR2 sub-subfamily. Three rho subunits (rho-1/GBRR1, rho-2/GBRR2 and rho-3/GBRR3) coassemble either to form functional homopentamers or heteropentamers. Rho-2 is unable to form a functional homopentamer. Interacts with SQSTM1. In terms of tissue distribution, expressed in the cerebellum.

Its subcellular location is the postsynaptic cell membrane. It is found in the cell membrane. The catalysed reaction is chloride(in) = chloride(out). Rho subunit of the pentameric ligand-gated chloride channels responsible for mediating the effects of gamma-aminobutyric acid (GABA), the major inhibitory neurotransmitter in the brain. Rho-containing GABA-gated chloride channels are a subclass of GABA(A) receptors (GABAARs) entirely composed of rho subunits, where GABA molecules bind at the rho intersubunit interfaces. When activated by GABA, rho-GABAARs selectively allow the flow of chloride anions across the cell membrane down their electrochemical gradient. Rho-2 GABAARs may contribute to the regulation of glial development in the cerebellum by controlling extrasynaptic transmission. Rho-2 GABAARs are also involved in neuronal tonic (extrasynaptic) and phasic (synaptic) transmission in the Purkinje neurons of the cerebellum. Rho-2 GABAARs expressed in retina may play a role in retinal neurotransmission. The chain is Gamma-aminobutyric acid receptor subunit rho-2 from Mus musculus (Mouse).